A 1084-amino-acid chain; its full sequence is Teashirt homolog 1 (1084 aa).

Disordered regions lie at residues 49–108 (EETE…SVSY), 140–167 (NSATSNNDASQKESSTPTPTPPTSTAST), and 269–298 (GHYRDDNRDKDSEKTKRWSKPRKRSLMEME). Composition is skewed to polar residues over residues 57–71 (QSYQNSPVSTATNQD) and 140–152 (NSATSNNDASQKE). 2 C2H2-type zinc fingers span residues 246–270 (FRCKDCSAAYDTLVELTVHMNETGH) and 307–331 (LKCMYCGHSFESLQDLSVHMIKTKH). Residues 269 to 284 (GHYRDDNRDKDSEKTK) show a composition bias toward basic and acidic residues. A C2H2-type 3; atypical zinc finger spans residues 416–440 (LKCMECGSSHDTLQQLTAHMMVTGH). Disordered regions lie at residues 467–534 (SIPL…EKFE) and 653–728 (TGKV…LKAK). Basic and acidic residues-rich tracts occupy residues 496 to 534 (SEEKKEPEKEKEKEKAPPAAGDAERKIKEETEDATEKFE), 653 to 671 (TGKVSIKKEERPTEKEKSS), and 681 to 714 (KENKDLPKTEETGSKPQKKGSDSETGKAKKESTL). The residue at position 771 (Ser771) is a Phosphoserine. The segment at 855-879 (GRLTPKSSTPSTVSEKSDADGSSFE) is disordered. Over residues 859–868 (PKSSTPSTVS) the composition is skewed to polar residues. Residues 891–961 (RKGRQSNWNP…NVKYQLRRTG (71 aa)) constitute a DNA-binding region (homeobox; atypical). 2 C2H2-type zinc fingers span residues 976-998 (FFCNDCASQFRTASTYVSHLETH) and 1044-1067 (FQCKLCNRTFASKHAVKLHLSKTH).

Belongs to the teashirt C2H2-type zinc-finger protein family. Interacts (via homeobox domain) with APBB1 (via PID domain 1).

The protein resides in the nucleus. Its function is as follows. Probable transcriptional regulator involved in developmental processes. May act as a transcriptional repressor (Potential). In Mus musculus (Mouse), this protein is Teashirt homolog 1 (Tshz1).